The following is a 515-amino-acid chain: MYPRGVKRSHHDYHRQTAFRTIKRSTHRQTSKFISHFAKNFRGKLAPLKQLDESRLDALSLTELEQLKTIIEEKQQEKRAQNNAITFLPNLPTVPFADTNFSLKSLGLRPYNGDARDPKQRIRDRFPQTHERICLLTNDILETDLLLRYRQCLDSLTREENQQLMGDRIFSLTNSPCLAFTVATVEEACSYFKFHDLHNLPVNPQDLFMYTITVMKFEFFNKLNMAKLTCVFNDNGHGDIEYRKLRQLCGKPVLDREMPNSELEVQQQTPDSFRHPIQQAMSIVVTFARILRQIKEQIIQTKKPQFIRDFDTGRVAERYECGLMSRLIGKQFSNHKCDDVSCQNRIERIMAPWKPSLFFCTYFAKDAPKFKLFPNFPEEYRNLSFTCPKVDTEPSCSYSTNHDLPQTSHRSHKNHGTPKVKSKVCVEKPDTSILTTTKTTTEILIEESMETDNKIPNPRELNFNQAKQEEIVIININENVNSKHESESSVEMDLDLDYEADTCETNLNACSSDSE.

Zn(2+) contacts are provided by Cys230, His335, Cys337, and Cys342. Residues 230–342 (CVFNDNGHGD…SNHKCDDVSC (113 aa)) form a CHC2-type zinc finger. The span at 398–408 (YSTNHDLPQTS) shows a compositional bias: polar residues. The disordered stretch occupies residues 398-422 (YSTNHDLPQTSHRSHKNHGTPKVKS). The span at 409–422 (HRSHKNHGTPKVKS) shows a compositional bias: basic residues.

The protein belongs to the HHV-1 ICP27 protein family.

The protein localises to the virion tegument. Its subcellular location is the virion. It is found in the host nucleus. The protein resides in the host cytoplasm. Functionally, immediate early (EI) protein that plays many roles during productive infection including regulation of viral gene expression and nuclear export of intronless viral RNAs. The polypeptide is mRNA export factor ICP27 homolog (Human herpesvirus 6A (strain Uganda-1102) (HHV-6 variant A)).